We begin with the raw amino-acid sequence, 556 residues long: Urocanate hydratase (556 aa).

NAD(+) is bound by residues Gly-52–Gly-53, Gln-130, Gly-176–Gly-178, Glu-196, Arg-201, Asn-242–Ala-243, Gln-263–His-267, Tyr-273–Leu-274, and Tyr-322. Cys-410 is an active-site residue. NAD(+) is bound at residue Gly-492.

This sequence belongs to the urocanase family. The cofactor is NAD(+).

The protein resides in the cytoplasm. It carries out the reaction 4-imidazolone-5-propanoate = trans-urocanate + H2O. The protein operates within amino-acid degradation; L-histidine degradation into L-glutamate; N-formimidoyl-L-glutamate from L-histidine: step 2/3. Functionally, catalyzes the conversion of urocanate to 4-imidazolone-5-propionate. This is Urocanate hydratase from Acidiphilium cryptum (strain JF-5).